A 214-amino-acid chain; its full sequence is Coiled-coil domain-containing protein 169 (214 aa).

Residues 30–144 (EMLQMSTFEL…IEQEAKAYYK (115 aa)) adopt a coiled-coil conformation. A disordered region spans residues 161-214 (VTQEAAKKQQSDPAHATREKPAFKAKYNGLAKRRTMTKRRGGMTKGSHPSNMKH). Residues 165–182 (AAKKQQSDPAHATREKPA) are compositionally biased toward basic and acidic residues. Residues 191–202 (AKRRTMTKRRGG) show a composition bias toward basic residues.

Belongs to the CCDC169 family.

This is Coiled-coil domain-containing protein 169 (ccdc169) from Xenopus laevis (African clawed frog).